The primary structure comprises 101 residues: Large ribosomal subunit protein bL21 (101 aa).

It belongs to the bacterial ribosomal protein bL21 family. Part of the 50S ribosomal subunit. Contacts protein L20.

In terms of biological role, this protein binds to 23S rRNA in the presence of protein L20. The sequence is that of Large ribosomal subunit protein bL21 from Metamycoplasma arthritidis (strain 158L3-1) (Mycoplasma arthritidis).